The primary structure comprises 207 residues: Interleukin-6 (207 aa).

The first 18 residues, 1–18, serve as a signal peptide directing secretion; that stretch reads MKFFSIASLGLLLVVATA. Positions 26 to 47 are disordered; it reads REDGENSVTRNKPTRASSGKTR. The segment covering 31-44 has biased composition (polar residues); it reads NSVTRNKPTRASSG. Cys65 and Cys71 are oxidised to a cystine. Residue Ser74 is modified to Phosphoserine. Residues Cys94 and Cys104 are joined by a disulfide bond.

It belongs to the IL-6 superfamily. In terms of assembly, component of a hexamer of two molecules each of IL6, IL6R and IL6ST; first binds to IL6R to associate with the signaling subunit IL6ST. Interacts with IL6R (via the N-terminal ectodomain); this interaction may be affected by IL6R-binding with SORL1, hence decreasing IL6 cis signaling. Interacts with SORL1 (via the N-terminal ectodomain); this interaction leads to IL6 internalization and lysosomal degradation. May form a trimeric complex with the soluble SORL1 ectodomain and soluble IL6R receptor; this interaction might stabilize circulating IL6, hence promoting IL6 trans signaling.

The protein localises to the secreted. Functionally, cytokine with a wide variety of biological functions in immunity, tissue regeneration, and metabolism. Binds to IL6R, then the complex associates to the signaling subunit IL6ST/gp130 to trigger the intracellular IL6-signaling pathway. The interaction with the membrane-bound IL6R and IL6ST stimulates 'classic signaling', whereas the binding of IL6 and soluble IL6R to IL6ST stimulates 'trans-signaling'. Alternatively, 'cluster signaling' occurs when membrane-bound IL6:IL6R complexes on transmitter cells activate IL6ST receptors on neighboring receiver cells. In terms of biological role, IL6 is a potent inducer of the acute phase response. Rapid production of IL6 contributes to host defense during infection and tissue injury, but excessive IL6 synthesis is involved in disease pathology. In the innate immune response, is synthesized by myeloid cells, such as macrophages and dendritic cells, upon recognition of pathogens through toll-like receptors (TLRs) at the site of infection or tissue injury. In the adaptive immune response, is required for the differentiation of B cells into immunoglobulin-secreting cells. Plays a major role in the differentiation of CD4(+) T cell subsets. Essential factor for the development of T follicular helper (Tfh) cells that are required for the induction of germinal-center formation. Required to drive naive CD4(+) T cells to the Th17 lineage. Also required for proliferation of myeloma cells and the survival of plasmablast cells. Acts as an essential factor in bone homeostasis and on vessels directly or indirectly by induction of VEGF, resulting in increased angiogenesis activity and vascular permeability. Induces, through 'trans-signaling' and synergistically with IL1B and TNF, the production of VEGF. Involved in metabolic controls, is discharged into the bloodstream after muscle contraction increasing lipolysis and improving insulin resistance. 'Trans-signaling' in central nervous system also regulates energy and glucose homeostasis. Mediates, through GLP-1, crosstalk between insulin-sensitive tissues, intestinal L cells and pancreatic islets to adapt to changes in insulin demand. Also acts as a myokine. Plays a protective role during liver injury, being required for maintenance of tissue regeneration. Also has a pivotal role in iron metabolism by regulating HAMP/hepcidin expression upon inflammation or bacterial infection. Through activation of IL6ST-YAP-NOTCH pathway, induces inflammation-induced epithelial regeneration. This chain is Interleukin-6 (IL6), found in Marmota monax (Woodchuck).